Reading from the N-terminus, the 763-residue chain is Phosphoglycerol transferase I (763 aa).

Transmembrane regions (helical) follow at residues 1–21 (MSELLSFALFLASVLIYAWKA), 26–46 (WWFAATLTVLGLFVVLNITLF), 77–97 (ILPGIGIVLGLTAVFGALGWI), and 108–128 (FGYSLLALLLALGSVDASPAF).

The protein belongs to the OpgB family.

It localises to the cell inner membrane. The catalysed reaction is a phosphatidylglycerol + a membrane-derived-oligosaccharide D-glucose = a 1,2-diacyl-sn-glycerol + a membrane-derived-oligosaccharide 6-(glycerophospho)-D-glucose.. Its pathway is glycan metabolism; osmoregulated periplasmic glucan (OPG) biosynthesis. Functionally, transfers a phosphoglycerol residue from phosphatidylglycerol to the membrane-bound nascent glucan backbones. The sequence is that of Phosphoglycerol transferase I from Escherichia coli O127:H6 (strain E2348/69 / EPEC).